The following is a 314-amino-acid chain: R2-like ligand binding oxidase (314 aa).

Residues Glu68, Glu101, and His104 each contribute to the Mn(2+) site. Positions 71–162 (VTEDIQPFMS…AAQVRASVTY (92 aa)) form a cross-link, 3-(O4'-tyrosyl)-valine (Val-Tyr). A Fe cation-binding site is contributed by Glu101. Residues Glu167, Glu202, and His205 each coordinate Fe cation.

It belongs to the ribonucleoside diphosphate reductase small chain family. R2-like ligand binding oxidase subfamily. As to quaternary structure, homodimer. The cofactor is Fe cation. Mn(2+) serves as cofactor.

Its function is as follows. Probable oxidase that might be involved in lipid metabolism. The sequence is that of R2-like ligand binding oxidase from Mycobacterium bovis (strain ATCC BAA-935 / AF2122/97).